Consider the following 1190-residue polypeptide: Wings apart-like protein homolog (1190 aa).

Disordered regions lie at residues 1 to 23 (MTSRFGKTYSRKGGNGSSKFDEV) and 46 to 82 (QKRPNFKPDIQEIPKKPKVEEESTGDPFGFDSDDESL). Residues 1-659 (MTSRFGKTYS…ENQEFTDDIE (659 aa)) are mediates interaction with the cohesin complex. The segment covering 54-66 (DIQEIPKKPKVEE) has biased composition (basic and acidic residues). Residues 73–75 (FGF) carry the FGF motif 1 motif. Serine 77 is subject to Phosphoserine. Lysine 168 is subject to N6-acetyllysine. Residues serine 221, serine 223, and serine 226 each carry the phosphoserine modification. Residues 260-286 (LLEMKDDDFKNRLENLNEAIEEDIVQS) are a coiled coil. Phosphoserine occurs at positions 347 and 380. The FGF motif 2 signature appears at 429-431 (FGF). A Phosphoserine modification is found at serine 443. The short motif at 453-455 (FGF) is the FGF motif 3 element. 2 positions are modified to phosphoserine: serine 459 and serine 461. Residues 459 to 469 (SESEDDEDDDC) are compositionally biased toward acidic residues. The segment at 459 to 553 (SESEDDEDDD…SGPKRSPTKA (95 aa)) is disordered. Polar residues predominate over residues 494-509 (SNDNSQDSQSGTNNAE). Residues 531-540 (QGDKSKENTR) show a composition bias toward basic and acidic residues. Residues 626–1169 (RREDKELYTV…KKFLSFMNLT (544 aa)) enclose the WAPL domain. Residues 749–782 (ELEQDASSAKLLNEKDMNKIKEKIRRLCETVHNK) adopt a coiled-coil conformation. Serine 904 carries the phosphoserine modification.

Belongs to the WAPL family. Interacts with the cohesin complex throughout the cell cycle; interacts with both chromatin-bound and soluble pools of the complex. Interacts with RAD21; the interaction is direct. Interacts with PDS5A; the interaction is direct, cohesin-dependent and competitive with CDCA5/SORORIN. Interacts (via FGF motifs) with PDS5B; the interaction is direct. Interacts with a SMC1 protein (SMC1A or SMC1B) and SMC3. In terms of assembly, (Microbial infection) Isoform 2 interacts with Epstein-Barr virus EBNA2. Post-translationally, deubiquitinated by USP37; leading to stabilization. As to expression, isoform 1 is highly expressed in uterine cervix tumor. Isoform 2 is widely expressed with a high level in skeletal muscle and heart.

The protein resides in the nucleus. It is found in the chromosome. It localises to the cytoplasm. In terms of biological role, regulator of sister chromatid cohesion in mitosis which negatively regulates cohesin association with chromatin. Involved in both sister chromatid cohesion during interphase and sister-chromatid resolution during early stages of mitosis. Couples DNA replication to sister chromatid cohesion. Cohesion ensures that chromosome partitioning is accurate in both meiotic and mitotic cells and plays an important role in DNA repair. This chain is Wings apart-like protein homolog, found in Homo sapiens (Human).